A 244-amino-acid polypeptide reads, in one-letter code: Phosphoadenosine 5'-phosphosulfate reductase (244 aa).

Cys239 acts as the Nucleophile; cysteine thiosulfonate intermediate in catalysis.

Belongs to the PAPS reductase family. CysH subfamily.

The protein resides in the cytoplasm. It carries out the reaction [thioredoxin]-disulfide + sulfite + adenosine 3',5'-bisphosphate + 2 H(+) = [thioredoxin]-dithiol + 3'-phosphoadenylyl sulfate. It participates in sulfur metabolism; hydrogen sulfide biosynthesis; sulfite from sulfate: step 3/3. Functionally, catalyzes the formation of sulfite from phosphoadenosine 5'-phosphosulfate (PAPS) using thioredoxin as an electron donor. This Shigella dysenteriae serotype 1 (strain Sd197) protein is Phosphoadenosine 5'-phosphosulfate reductase.